The sequence spans 355 residues: Guanine nucleotide-binding protein G(i) subunit alpha-2 (355 aa).

The N-myristoyl glycine moiety is linked to residue G2. The S-palmitoyl cysteine moiety is linked to residue C3. Residues 32 to 355 (REVKLLLLGA…KNNLKDCGLF (324 aa)) form the G-alpha domain. Positions 35–48 (KLLLLGAGESGKST) are G1 motif. GTP-binding positions include 40–47 (GAGESGKS), 176–182 (LRTRVKT), 201–205 (DVGGQ), 270–273 (NKKD), and A327. S47 and T182 together coordinate Mg(2+). A G2 motif region spans residues 174–182 (DVLRTRVKT). Residues 197–206 (FKMFDVGGQR) are G3 motif. The segment at 266–273 (ILFLNKKD) is G4 motif. A G5 motif region spans residues 325–330 (TCATDT).

Belongs to the G-alpha family. G(i/o/t/z) subfamily. G proteins are composed of 3 units; alpha, beta and gamma. The alpha chain contains the guanine nucleotide binding site. In this context, interacts with GNB2. Interacts with UNC5B. Interacts with GPSM1. Interacts with RGS12 and RGS14. Interacts (inactive GDP-bound form) with NUCB1 (via GBA motif); the interaction leads to activation of GNAI3. Interacts (inactive GDP-bound form) with CCDC88C/DAPLE (via GBA motif). Interacts (inactive GDP-bound form) with CCDC8A/GIV (via GBA motif). Interacts with CXCR1 and CXCR2.

The protein resides in the cytoplasm. It is found in the cytoskeleton. It localises to the microtubule organizing center. Its subcellular location is the centrosome. The protein localises to the cell membrane. The protein resides in the membrane. Its function is as follows. Guanine nucleotide-binding proteins (G proteins) are involved as modulators or transducers in various transmembrane signaling systems. The G(i) proteins are involved in hormonal regulation of adenylate cyclase: they inhibit the cyclase in response to beta-adrenergic stimuli. May play a role in cell division. The chain is Guanine nucleotide-binding protein G(i) subunit alpha-2 (Gnai2) from Mus musculus (Mouse).